The primary structure comprises 328 residues: Tetraacyldisaccharide 4'-kinase (328 aa).

59–66 (TAGGNGKT) is an ATP binding site.

This sequence belongs to the LpxK family.

The enzyme catalyses a lipid A disaccharide + ATP = a lipid IVA + ADP + H(+). It participates in glycolipid biosynthesis; lipid IV(A) biosynthesis; lipid IV(A) from (3R)-3-hydroxytetradecanoyl-[acyl-carrier-protein] and UDP-N-acetyl-alpha-D-glucosamine: step 6/6. In terms of biological role, transfers the gamma-phosphate of ATP to the 4'-position of a tetraacyldisaccharide 1-phosphate intermediate (termed DS-1-P) to form tetraacyldisaccharide 1,4'-bis-phosphate (lipid IVA). The sequence is that of Tetraacyldisaccharide 4'-kinase from Aliivibrio fischeri (strain MJ11) (Vibrio fischeri).